Reading from the N-terminus, the 278-residue chain is Release factor glutamine methyltransferase (278 aa).

Residues 120–124 (GTGTG), D143, and N184 contribute to the S-adenosyl-L-methionine site. 184–187 (NPPY) is a binding site for substrate.

The protein belongs to the protein N5-glutamine methyltransferase family. PrmC subfamily.

It catalyses the reaction L-glutaminyl-[peptide chain release factor] + S-adenosyl-L-methionine = N(5)-methyl-L-glutaminyl-[peptide chain release factor] + S-adenosyl-L-homocysteine + H(+). Its function is as follows. Methylates the class 1 translation termination release factors RF1/PrfA and RF2/PrfB on the glutamine residue of the universally conserved GGQ motif. In Deinococcus radiodurans (strain ATCC 13939 / DSM 20539 / JCM 16871 / CCUG 27074 / LMG 4051 / NBRC 15346 / NCIMB 9279 / VKM B-1422 / R1), this protein is Release factor glutamine methyltransferase.